Here is a 298-residue protein sequence, read N- to C-terminus: Lipoyl synthase (298 aa).

[4Fe-4S] cluster contacts are provided by C37, C42, C48, C63, C67, C70, and S277. One can recognise a Radical SAM core domain in the interval 49–266 (WGGGTATVML…KTLAESYGFL (218 aa)).

Belongs to the radical SAM superfamily. Lipoyl synthase family. The cofactor is [4Fe-4S] cluster.

Its subcellular location is the cytoplasm. It catalyses the reaction [[Fe-S] cluster scaffold protein carrying a second [4Fe-4S](2+) cluster] + N(6)-octanoyl-L-lysyl-[protein] + 2 oxidized [2Fe-2S]-[ferredoxin] + 2 S-adenosyl-L-methionine + 4 H(+) = [[Fe-S] cluster scaffold protein] + N(6)-[(R)-dihydrolipoyl]-L-lysyl-[protein] + 4 Fe(3+) + 2 hydrogen sulfide + 2 5'-deoxyadenosine + 2 L-methionine + 2 reduced [2Fe-2S]-[ferredoxin]. It participates in protein modification; protein lipoylation via endogenous pathway; protein N(6)-(lipoyl)lysine from octanoyl-[acyl-carrier-protein]: step 2/2. Catalyzes the radical-mediated insertion of two sulfur atoms into the C-6 and C-8 positions of the octanoyl moiety bound to the lipoyl domains of lipoate-dependent enzymes, thereby converting the octanoylated domains into lipoylated derivatives. The polypeptide is Lipoyl synthase (Myxococcus xanthus (strain DK1622)).